The chain runs to 393 residues: Calreticulin (393 aa).

A signal peptide spans 1 to 16 (MLSILLTLLLSKYALG). An N-linked (GlcNAc...) asparagine glycan is attached at N27. C103 and C135 are joined by a disulfide. 4 residues coordinate an alpha-D-glucoside: Y107, K109, Y126, and D133. 7 consecutive repeat copies span residues 189 to 200 (VEEGSLEDDWDM), 208 to 219 (DPNDKKPDDWVD), 225 to 236 (DPDDKKPDNWDQ), 242 to 253 (DMDAKKPDDWDD), 257 to 267 (GEWERPQKDNP), 271 to 281 (GEWTPRRIDNP), and 285 to 295 (GEWKPVQIDNP). The segment at 189 to 253 (VEEGSLEDDW…DAKKPDDWDD (65 aa)) is 4 X 12 AA approximate repeats. The segment at 194–277 (LEDDWDMLPP…EYKGEWTPRR (84 aa)) is disordered. Residues 202–216 (PPKKIDDPNDKKPDD) show a composition bias toward basic and acidic residues. Over residues 217–226 (WVDEQFIDDP) the composition is skewed to acidic residues. Basic and acidic residues-rich tracts occupy residues 227–249 (DDKK…KKPD) and 258–277 (EWER…TPRR). Residues 257–295 (GEWERPQKDNPEYKGEWTPRRIDNPKYKGEWKPVQIDNP) form a 3 X 11 AA approximate repeats region. D315 lines the an alpha-D-glucoside pocket. Residues 351-393 (AEVAKEQSSAKDDKEEAEETKERKELPYDAKASDEPSGDHDEL) form a disordered region. The short motif at 390–393 (HDEL) is the Prevents secretion from ER element.

It belongs to the calreticulin family.

Its subcellular location is the endoplasmic reticulum lumen. Molecular calcium-binding chaperone promoting folding, oligomeric assembly and quality control in the ER via the calreticulin/calnexin cycle. This lectin may interact transiently with almost all of the monoglucosylated glycoproteins that are synthesized in the ER. This Schistosoma mansoni (Blood fluke) protein is Calreticulin.